We begin with the raw amino-acid sequence, 699 residues long: 4-alpha-glucanotransferase (699 aa).

This sequence belongs to the disproportionating enzyme family.

The protein resides in the cytoplasm. It catalyses the reaction Transfers a segment of a (1-&gt;4)-alpha-D-glucan to a new position in an acceptor, which may be glucose or a (1-&gt;4)-alpha-D-glucan.. This Haemophilus influenzae (strain ATCC 51907 / DSM 11121 / KW20 / Rd) protein is 4-alpha-glucanotransferase (malQ).